Reading from the N-terminus, the 530-residue chain is MFS transporter PfmaC (530 aa).

A disordered region spans residues 41-76 (TTAVSDGDNQSSTMSGKTAAGDATSPASGSGSGGWF). The segment covering 42–56 (TAVSDGDNQSSTMSG) has biased composition (polar residues). The segment covering 59 to 69 (AAGDATSPASG) has biased composition (low complexity). 10 consecutive transmembrane segments (helical) span residues 165–182 (YWLP…LGMY), 195–215 (FFIG…LGCW), 226–246 (ALFV…QAAL), 261–281 (WLFI…LFCF), 324–344 (IFTS…SLTV), 369–389 (NIPT…GFVS), 396–416 (GPVC…FTAW), 422–442 (LLMA…LLAG), 456–476 (AFIL…FQQL), and 493–513 (PSAL…IPLL).

Belongs to the major facilitator superfamily. Allantoate permease family.

The protein resides in the cell membrane. Its function is as follows. MFS transporter; part of the gene cluster that mediates the biosynthesis of dihydroxynaphthalene (DHN)-melanin, a bluish-green pigment forming a dark layer in the conidial wall that protects the conidia from UV radiations. The protein is MFS transporter PfmaC of Pestalotiopsis fici (strain W106-1 / CGMCC3.15140).